The sequence spans 95 residues: Large ribosomal subunit protein bL28 (95 aa).

Residues 1–22 (MSRRCELTGKGPMTGNNVSHAN) form a disordered region.

Belongs to the bacterial ribosomal protein bL28 family.

In Ruegeria pomeroyi (strain ATCC 700808 / DSM 15171 / DSS-3) (Silicibacter pomeroyi), this protein is Large ribosomal subunit protein bL28.